A 417-amino-acid chain; its full sequence is UDP-N-acetylglucosamine 1-carboxyvinyltransferase (417 aa).

Lys-22 to Asn-23 is a phosphoenolpyruvate binding site. Arg-92 is a binding site for UDP-N-acetyl-alpha-D-glucosamine. The active-site Proton donor is the Cys-116. Residue Cys-116 is modified to 2-(S-cysteinyl)pyruvic acid O-phosphothioketal. Residues Asp-304 and Ile-326 each contribute to the UDP-N-acetyl-alpha-D-glucosamine site.

This sequence belongs to the EPSP synthase family. MurA subfamily.

The protein resides in the cytoplasm. The catalysed reaction is phosphoenolpyruvate + UDP-N-acetyl-alpha-D-glucosamine = UDP-N-acetyl-3-O-(1-carboxyvinyl)-alpha-D-glucosamine + phosphate. It participates in cell wall biogenesis; peptidoglycan biosynthesis. Functionally, cell wall formation. Adds enolpyruvyl to UDP-N-acetylglucosamine. This chain is UDP-N-acetylglucosamine 1-carboxyvinyltransferase, found in Geobacter metallireducens (strain ATCC 53774 / DSM 7210 / GS-15).